Here is a 157-residue protein sequence, read N- to C-terminus: Selenoprotein F (157 aa).

An N-terminal signal peptide occupies residues 1-19; sequence MSGEVYILWLLSLIQTLSA. Sec-84 is a non-standard amino acid (selenocysteine).

Belongs to the selenoprotein M/F family. As to expression, expressed in the brain, liver and retina. Localized to the retinal ganglion cell layer, the inner nuclear layer and the outer nuclear layer at both parr and smolt stages.

It is found in the endoplasmic reticulum lumen. Functionally, may be involved in redox reactions associated with the formation of disulfide bonds. May contribute to the quality control of protein folding in the endoplasmic reticulum. May be involved in retinal development. The sequence is that of Selenoprotein F from Oncorhynchus mykiss (Rainbow trout).